We begin with the raw amino-acid sequence, 249 residues long: tRNA (guanine-N(7)-)-methyltransferase (249 aa).

A disordered region spans residues 1-24 (MHSIPADTGHTPSRAPAGNGSPPA). S-adenosyl-L-methionine is bound by residues glutamate 81, glutamate 106, aspartate 133, and aspartate 156. The active site involves aspartate 156. Residue lysine 160 participates in substrate binding. The tract at residues 162-167 (RHNKRR) is interaction with RNA. Substrate is bound by residues aspartate 192 and 227 to 230 (TKFE).

The protein belongs to the class I-like SAM-binding methyltransferase superfamily. TrmB family.

The catalysed reaction is guanosine(46) in tRNA + S-adenosyl-L-methionine = N(7)-methylguanosine(46) in tRNA + S-adenosyl-L-homocysteine. The protein operates within tRNA modification; N(7)-methylguanine-tRNA biosynthesis. Catalyzes the formation of N(7)-methylguanine at position 46 (m7G46) in tRNA. The protein is tRNA (guanine-N(7)-)-methyltransferase of Paracidovorax citrulli (strain AAC00-1) (Acidovorax citrulli).